The sequence spans 177 residues: Large ribosomal subunit protein uL6 (177 aa).

Basic and acidic residues predominate over residues 157–171; the sequence is YKGKGVRYSDENVRR. Residues 157–177 are disordered; that stretch reads YKGKGVRYSDENVRRKEAKKK.

This sequence belongs to the universal ribosomal protein uL6 family. Part of the 50S ribosomal subunit.

This protein binds to the 23S rRNA, and is important in its secondary structure. It is located near the subunit interface in the base of the L7/L12 stalk, and near the tRNA binding site of the peptidyltransferase center. The chain is Large ribosomal subunit protein uL6 from Pseudoalteromonas translucida (strain TAC 125).